The primary structure comprises 280 residues: Orotidine 5'-phosphate decarboxylase (280 aa).

Substrate-binding positions include D40, 62–64 (KTH), 93–102 (DRKFVDIGNT), Y228, and R246. K95 acts as the Proton donor in catalysis.

The protein belongs to the OMP decarboxylase family.

The enzyme catalyses orotidine 5'-phosphate + H(+) = UMP + CO2. It functions in the pathway pyrimidine metabolism; UMP biosynthesis via de novo pathway; UMP from orotate: step 2/2. This is Orotidine 5'-phosphate decarboxylase (PYRG) from Solorina crocea.